Here is a 134-residue protein sequence, read N- to C-terminus: Histone-like protein Rv3852 (134 aa).

Residues 1–10 (MPDPQDRPDS) show a composition bias toward basic and acidic residues. The interval 1–68 (MPDPQDRPDS…PAEAPVSLQQ (68 aa)) is disordered. Residues 23-48 (LPAKKAAKKAPARKTPAKKAPAKKTP) are compositionally biased toward basic residues. The helical transmembrane segment at 111–128 (PVPLIVAVTLSLLALLLI) threads the bilayer.

As to quaternary structure, homodimer in solution. Is probably able to self-associate in higher oligomers along the DNA molecules. Interacts with the N-terminal region of Wag31.

It is found in the cell inner membrane. With respect to regulation, can interact directly in vitro with the compound agrimophol, a phloroglucinol from the A.pilosa plant, whose extracts have been used in traditional Chinese medicine to treat pulmonary infections. Interaction with agrimophol leads to disruption of Rv3852's DNA binding function. Functionally, binds DNA in vitro. It has been proposed that Rv3852 plays a role in nucleoid organization and may function as an anchorage to tether the DNA to the membrane. However, it was later shown that it has no influence on nucleoid shape or compaction. It plays no role in virulence and only a minor role in the control of transcription, and does not appear to function as a typical nucleoid-associated protein. Interacts with Wag31, an important cell shape and cell wall integrity determinant, and facilitates the localization of Wag31 to the cell poles and the cell wall, thus enabling nascent peptidoglycan synthesis. In Mycobacterium tuberculosis (strain ATCC 25618 / H37Rv), this protein is Histone-like protein Rv3852.